Consider the following 246-residue polypeptide: Probable transcriptional regulatory protein GWCH70_2524 (246 aa).

The protein belongs to the TACO1 family.

The protein localises to the cytoplasm. The polypeptide is Probable transcriptional regulatory protein GWCH70_2524 (Geobacillus sp. (strain WCH70)).